The sequence spans 1115 residues: Receptor-type tyrosine-protein phosphatase H (1115 aa).

Positions 1 to 27 (MAGAGGGLGVWGNLVLLGLCSWTGARA) are cleaved as a signal peptide. Residues 28–754 (PAPNPGRNLT…VVCHTESAGV (727 aa)) lie on the Extracellular side of the membrane. Fibronectin type-III domains lie at 32-121 (PGRN…APNP), 122-209 (VRNL…TAHN), 210-299 (PVRN…APNP), 300-387 (VRNL…TAPN), 388-477 (PVRN…VPNA), 478-563 (VTSL…TAAT), 564-666 (APNE…TYPD), and 665-749 (PDTV…VCHT). N-linked (GlcNAc...) asparagine glycosylation is found at asparagine 35, asparagine 83, asparagine 172, asparagine 256, asparagine 285, asparagine 350, asparagine 434, asparagine 468, asparagine 556, and asparagine 642. Residues 755–775 (IAGAFVGILLFLILVGLLIFF) traverse the membrane as a helical segment. Residues 776 to 1115 (LKRRNKKKQQ…AAIQAHKLEV (340 aa)) are Cytoplasmic-facing. The 260-residue stretch at 820–1079 (FADEYQQLSL…VFLHQCILRF (260 aa)) folds into the Tyrosine-protein phosphatase domain. The Phosphocysteine intermediate role is filled by cysteine 1020. Phosphotyrosine is present on residues tyrosine 1094 and tyrosine 1102.

It belongs to the protein-tyrosine phosphatase family. Receptor class 3 subfamily. In terms of assembly, homodimer; disulfide-linked. Interacts with LCK. Interacts (phosphorylated form) with GRB2 (via SH2 domain). Interacts (phosphorylated form) with FYN (via SH2 domain). Interacts (via extracellular domain) with CEACAM20 (via extracellular domain); the interaction dephosphorylates CEACAM20. Expressed at high levels in the brain, spleen and liver and at lower levels in the heart and stomach. Expressed in pancreatic and colorectal cancer cells, but not in normal pancreas or colon. Expression in hepatocellular carcinoma is related to the differentiation status of the tumor and expression is inversely related to tumor aggressiveness.

Its subcellular location is the cell projection. It localises to the microvillus membrane. It is found in the apical cell membrane. The protein localises to the cytoplasm. The catalysed reaction is O-phospho-L-tyrosyl-[protein] + H2O = L-tyrosyl-[protein] + phosphate. Its activity is regulated as follows. Regulated by reversible dimerization. Dimerization reduces its catalytic activity. Functionally, protein phosphatase that may contribute to contact inhibition of cell growth and motility by mediating the dephosphorylation of focal adhesion-associated substrates and thus negatively regulating integrin-promoted signaling processes. Induces apoptotic cell death by at least two distinct mechanisms: inhibition of cell survival signaling mediated by PI 3-kinase, Akt, and ILK and activation of a caspase-dependent proapoptotic pathway. Inhibits the basal activity of LCK and its activation in response to TCR stimulation and TCR-induced activation of MAP kinase and surface expression of CD69. Inhibits TCR-induced tyrosine phosphorylation of LAT and ZAP70. Inhibits both basal activity of DOK1 and its CD2-induced tyrosine phosphorylation. Induces dephosphorylation of BCAR1, focal adhesion kinase and SRC. Reduces migratory activity of activity of Jurkat cells. Reduces tyrosine phosphorylation of CEACAM20 and thereby contributes to suppress the intestinal immune response CEACAM20. This chain is Receptor-type tyrosine-protein phosphatase H (PTPRH), found in Homo sapiens (Human).